We begin with the raw amino-acid sequence, 338 residues long: Glycerol-3-phosphate dehydrogenase [NAD(P)+] (338 aa).

The NADPH site is built by W11, R30, and K109. Residues K109, G143, and S145 each coordinate sn-glycerol 3-phosphate. Residue A147 coordinates NADPH. The sn-glycerol 3-phosphate site is built by K198, D251, S261, R262, and N263. The active-site Proton acceptor is the K198. R262 is a binding site for NADPH. NADPH contacts are provided by V286 and E288.

Belongs to the NAD-dependent glycerol-3-phosphate dehydrogenase family.

Its subcellular location is the cytoplasm. The enzyme catalyses sn-glycerol 3-phosphate + NAD(+) = dihydroxyacetone phosphate + NADH + H(+). It catalyses the reaction sn-glycerol 3-phosphate + NADP(+) = dihydroxyacetone phosphate + NADPH + H(+). It functions in the pathway membrane lipid metabolism; glycerophospholipid metabolism. Catalyzes the reduction of the glycolytic intermediate dihydroxyacetone phosphate (DHAP) to sn-glycerol 3-phosphate (G3P), the key precursor for phospholipid synthesis. The protein is Glycerol-3-phosphate dehydrogenase [NAD(P)+] of Cupriavidus taiwanensis (strain DSM 17343 / BCRC 17206 / CCUG 44338 / CIP 107171 / LMG 19424 / R1) (Ralstonia taiwanensis (strain LMG 19424)).